Here is a 245-residue protein sequence, read N- to C-terminus: Carboxy-S-adenosyl-L-methionine synthase (245 aa).

S-adenosyl-L-methionine-binding positions include Tyr-42, 67-69, 92-93, 120-121, Asn-135, and Arg-202; these read GCS, DN, and DI.

Belongs to the class I-like SAM-binding methyltransferase superfamily. Cx-SAM synthase family. Homodimer.

The catalysed reaction is prephenate + S-adenosyl-L-methionine = carboxy-S-adenosyl-L-methionine + 3-phenylpyruvate + H2O. In terms of biological role, catalyzes the conversion of S-adenosyl-L-methionine (SAM) to carboxy-S-adenosyl-L-methionine (Cx-SAM). In Vibrio parahaemolyticus serotype O3:K6 (strain RIMD 2210633), this protein is Carboxy-S-adenosyl-L-methionine synthase.